Reading from the N-terminus, the 112-residue chain is Notch-regulated ankyrin repeat-containing protein A (112 aa).

ANK repeat units follow at residues 48-77 (EGQTALHQSVIDGNLELVKLLVKFGADIRL) and 81-110 (EGWSALHIAAFGGHQDIVLYLITKAKYSSG).

This sequence belongs to the NRARP family.

Functionally, regulates independently canonical Wnt and Notch signaling by modulating LEF1 and Notch protein turnover. Stabilizes LEF1, a pivotal transcription factor in the Wnt signaling cascade, by blocking its ubiquitination. Involved in angiogenesis; involved in intersegmental vessel patterning during development. The protein is Notch-regulated ankyrin repeat-containing protein A (nrarpa) of Danio rerio (Zebrafish).